The primary structure comprises 328 residues: Eukaryotic translation initiation factor 3 subunit I (328 aa).

WD repeat units lie at residues 8–49, 50–89, 145–184, 189–228, and 286–327; these read GHER…GTYE, GHTGAIWTCDINKSSTLMVSGAADNTMRLWDVKTGKQLYK, TRESKATVAGWSYLSKFLFTGHEDGSVSRYDAITGEFVES, NSGSTITDLQFYPDRTYFITSCKDTTAKAIDVDSFEVIKT, and GHFG…FKYT.

This sequence belongs to the eIF-3 subunit I family. As to quaternary structure, component of the eukaryotic translation initiation factor 3 (eIF-3) complex. The eIF-3 complex appears to include tif32/eif3a, SPAC25G10.08/eif3b, tif33/eif3c, SPBC4C3.07/eif3f, tif35/eif3g and sum1/eif3i. This set of common subunits may also associate exclusively with either moe1/eif3d and int6/eif3e, or with SPAC821.05/eif3h and SPAC1751.03/eif3m. The eIF-3 complex may also include SPAC3A12.13c/eif3j.

Its subcellular location is the cytoplasm. The protein resides in the nucleus. Component of the eukaryotic translation initiation factor 3 (eIF-3) complex, which is involved in protein synthesis of a specialized repertoire of mRNAs and, together with other initiation factors, stimulates binding of mRNA and methionyl-tRNAi to the 40S ribosome. The eIF-3 complex specifically targets and initiates translation of a subset of mRNAs involved in cell proliferation. This is Eukaryotic translation initiation factor 3 subunit I (sum1) from Schizosaccharomyces pombe (strain 972 / ATCC 24843) (Fission yeast).